The sequence spans 674 residues: Amino-acid acetyltransferase, mitochondrial (674 aa).

The N-terminal 50 residues, 1–50 (MPLVAAMLTRSNGAWKKATSVVQASICRDQQRPNHTTITSVTSVSQRRHF), are a transit peptide targeting the mitochondrion. Positions 33–45 (PNHTTITSVTSVS) are enriched in polar residues. The disordered stretch occupies residues 33 to 74 (PNHTTITSVTSVSQRRHFSSAENGAKPSRSHPSAAEAKQKRE). In terms of domain architecture, N-acetyltransferase spans 497-665 (GTPRLKLTDT…YEDVCRGVVP (169 aa)).

This sequence belongs to the acetyltransferase family.

Its subcellular location is the mitochondrion. It catalyses the reaction L-glutamate + acetyl-CoA = N-acetyl-L-glutamate + CoA + H(+). It functions in the pathway amino-acid biosynthesis; L-arginine biosynthesis; N(2)-acetyl-L-ornithine from L-glutamate: step 1/4. Functionally, N-acetylglutamate synthase involved in arginine biosynthesis. This is Amino-acid acetyltransferase, mitochondrial (ARG2) from Podospora anserina (strain S / ATCC MYA-4624 / DSM 980 / FGSC 10383) (Pleurage anserina).